The chain runs to 636 residues: DNA-dependent metalloprotease SPRTN (636 aa).

The interval 19–42 (QETPAAGWPDEDCPSSKRRRVDPS) is disordered. The SprT-like domain occupies 76–183 (RAMFLQFNDK…ASGTNITIYH (108 aa)). His-141 lines the Zn(2+) pocket. Glu-142 is an active-site residue. Residues His-145 and His-160 each contribute to the Zn(2+) site. 2 disordered regions span residues 238-382 (TYTK…GKQR) and 398-430 (RGAS…PSGK). Residues 241–268 (KIKEPENYGKTGKSDKQRDKMPATEMPK) show a composition bias toward basic and acidic residues. Low complexity predominate over residues 272 to 281 (PPSSTSSSGS). An SHP-box motif is present at residues 290–298 (FSGRGFVLG). Polar residues predominate over residues 302–311 (QIPTNKQIQS). Positions 313–327 (PKAPPEPLHSPPDSP) are enriched in pro residues. The segment covering 341-374 (RLSSGTSNIPRKRSVGNTNAFINVNGSPVRISNG) has biased composition (polar residues). Positions 399–416 (GASAVGSSKSSTDASTAD) are enriched in low complexity. Residues 451–458 (ESNISKYF) carry the PIP-box motif. The tract at residues 473 to 608 (TFGSPQKSAI…VRDQQANNPP (136 aa)) is disordered. Composition is skewed to polar residues over residues 492–523 (FGSN…SGSS) and 545–554 (SPRTSGTTPS). Positions 535–566 (SNFPSPRNIGSPRTSGTTPSGAKKRSWEEHNS) match the Nuclear localization signal motif. Basic and acidic residues-rich tracts occupy residues 559-570 (RSWEEHNSERVF) and 584-593 (TDKKREEVRS). The UBZ4-type zinc finger occupies 612–636 (TVHCPVCHIRLPESTINDHLDSCLL). Zn(2+) is bound by residues Cys-615, Cys-618, His-630, and Cys-634.

This sequence belongs to the Spartan family. In terms of assembly, homodimer. Zn(2+) is required as a cofactor. In terms of processing, autocatalytically cleaved in response to double-stranded DNA-binding: autocatalytic cleavage takes place in trans and leads to inactivation.

Its subcellular location is the nucleus. It localises to the chromosome. Its activity is regulated as follows. DNA-binding activates the protease activity: single-stranded DNA-binding specifically activates ability to cleave covalent DNA-protein cross-links (DPCs). In contrast, double-stranded DNA-binding specifically activates autocatalytic cleavage, and subsequent inactivation. Functionally, DNA-dependent metalloendopeptidase that mediates the proteolytic cleavage of covalent DNA-protein cross-links (DPCs) during DNA synthesis, thereby playing a key role in maintaining genomic integrity. DPCs are highly toxic DNA lesions that interfere with essential chromatin transactions, such as replication and transcription, and which are induced by reactive agents, such as UV light or formaldehyde. Associates with the DNA replication machinery and specifically removes DPCs during DNA synthesis. Catalyzes proteolytic cleavage of the hmces DNA-protein cross-link following unfolding by the brip1/fancj helicase. Acts as a pleiotropic protease for DNA-binding proteins cross-linked with DNA, such as top1, top2a, histones H3 and H4. Mediates degradation of DPCs that are not ubiquitinated, while it is not able to degrade ubiquitinated DPCs. SPRTN activation requires polymerase collision with DPCs followed by helicase bypass of DPCs. May also act as a 'reader' of ubiquitinated pcna: facilitates chromatin association of rad18 and is required for efficient pcna monoubiquitination, promoting a feed-forward loop to enhance pcna ubiquitination and translesion DNA synthesis. Acts as a regulator of translesion DNA synthesis by recruiting vcp/p97 to sites of DNA damage. The chain is DNA-dependent metalloprotease SPRTN from Danio rerio (Zebrafish).